A 203-amino-acid chain; its full sequence is Dephospho-CoA kinase (203 aa).

The DPCK domain occupies 3 to 202; it reads KIGLTGSIGM…MRIAKGDFRN (200 aa). 11 to 16 contributes to the ATP binding site; it reads GMGKST.

This sequence belongs to the CoaE family.

It localises to the cytoplasm. The catalysed reaction is 3'-dephospho-CoA + ATP = ADP + CoA + H(+). It functions in the pathway cofactor biosynthesis; coenzyme A biosynthesis; CoA from (R)-pantothenate: step 5/5. Catalyzes the phosphorylation of the 3'-hydroxyl group of dephosphocoenzyme A to form coenzyme A. In Rhizobium etli (strain ATCC 51251 / DSM 11541 / JCM 21823 / NBRC 15573 / CFN 42), this protein is Dephospho-CoA kinase.